The primary structure comprises 345 residues: Ribonucleoside-diphosphate reductase small chain 2 (345 aa).

Methionine 1 carries the N-acetylmethionine modification. Tyrosine 131 is a catalytic residue. 2 positions are modified to phosphoserine: serine 169 and serine 332. Threonine 334 carries the post-translational modification Phosphothreonine. Serine 336 is modified (phosphoserine). Residue lysine 337 forms a Glycyl lysine isopeptide (Lys-Gly) (interchain with G-Cter in ubiquitin) linkage.

Belongs to the ribonucleoside diphosphate reductase small chain family. Heterotetramer of two large (R1) and two small (R2) subunits. S.cerevisiae has two different R1 subunits (RNR1 and RNR3) and two different R2 subunits (RNR2 and RNR4). The functional form of the small subunits is a RNR2-RNR4 heterodimer, where RNR2 provides the iron-radical center and RNR4 is required for proper folding of RNR2 and assembly with the large subunits. Under normal growth conditions, the active form of the large subunits is a homodimer of the constitutively expressed RNR1. In damaged cells or cells arrested for DNA synthesis, the reductase consists of multiple species because of the association of the small subunits (RNR2-RNR4) with either the RNR1 homodimer or a heterodimer of RNR1 and the damage-inducible RNR3. Interacts with DIF1.

It is found in the nucleus. The enzyme catalyses a 2'-deoxyribonucleoside 5'-diphosphate + [thioredoxin]-disulfide + H2O = a ribonucleoside 5'-diphosphate + [thioredoxin]-dithiol. Provides the precursors necessary for DNA synthesis. Catalyzes the biosynthesis of deoxyribonucleotides from the corresponding ribonucleotides. RNR4 is required for proper folding of RNR2 and assembly with the large subunits. In Saccharomyces cerevisiae (strain ATCC 204508 / S288c) (Baker's yeast), this protein is Ribonucleoside-diphosphate reductase small chain 2 (RNR4).